A 385-amino-acid chain; its full sequence is Cytochrome b (385 aa).

4 consecutive transmembrane segments (helical) span residues 34-54, 78-99, 114-134, and 179-199; these read FGSILGLCLFLQIATGLILTM, WFIRNFHITGASLFFSCMFIHI, WYSGVILFICAMVTAFFGYVL, and FLVLHFLVPFLMIAVSLTHLL. Heme b-binding residues include histidine 84 and histidine 98. Heme b is bound by residues histidine 183 and histidine 197. Histidine 202 is an a ubiquinone binding site. Transmembrane regions (helical) follow at residues 227-247, 289-309, 321-341, and 348-368; these read FKDILGFLITLSLIFLGSTLF, LMGVFALIMSLSVLLFMPFLI, FMQFTFWLMISNFILLSWLGA, and YTIMSQVTSFLYFFIFLFLFP.

Belongs to the cytochrome b family. As to quaternary structure, the cytochrome bc1 complex contains 3 respiratory subunits (MT-CYB, CYC1 and UQCRFS1), 2 core proteins (UQCRC1 and UQCRC2) and probably 6 low-molecular weight proteins. The cofactor is heme b.

Its subcellular location is the mitochondrion inner membrane. Functionally, component of the ubiquinol-cytochrome c reductase complex (complex III or cytochrome b-c1 complex) that is part of the mitochondrial respiratory chain. The b-c1 complex mediates electron transfer from ubiquinol to cytochrome c. Contributes to the generation of a proton gradient across the mitochondrial membrane that is then used for ATP synthesis. The polypeptide is Cytochrome b (MT-CYB) (Myxine glutinosa (Atlantic hagfish)).